Consider the following 216-residue polypeptide: Ribose-5-phosphate isomerase A (216 aa).

Substrate-binding positions include 26-29 (TGST), 79-82 (DGAD), and 92-95 (KGGG). The active-site Proton acceptor is the Glu101. Lys119 is a binding site for substrate.

The protein belongs to the ribose 5-phosphate isomerase family. Homodimer.

It catalyses the reaction aldehydo-D-ribose 5-phosphate = D-ribulose 5-phosphate. It participates in carbohydrate degradation; pentose phosphate pathway; D-ribose 5-phosphate from D-ribulose 5-phosphate (non-oxidative stage): step 1/1. In terms of biological role, catalyzes the reversible conversion of ribose-5-phosphate to ribulose 5-phosphate. This Legionella pneumophila (strain Corby) protein is Ribose-5-phosphate isomerase A.